The sequence spans 333 residues: Protoheme IX farnesyltransferase (333 aa).

The next 7 membrane-spanning stretches (helical) occupy residues 63–83 (LACT…LNCI), 109–129 (AAFI…VSGV), 132–152 (LAAG…TAIL), 160–180 (IVIG…AASG), 188–208 (WLFA…ALLL), 245–265 (GFGV…LIPF), and 292–312 (WSIF…LPMA).

Belongs to the UbiA prenyltransferase family. Protoheme IX farnesyltransferase subfamily.

Its subcellular location is the cell inner membrane. It catalyses the reaction heme b + (2E,6E)-farnesyl diphosphate + H2O = Fe(II)-heme o + diphosphate. Its pathway is porphyrin-containing compound metabolism; heme O biosynthesis; heme O from protoheme: step 1/1. Converts heme B (protoheme IX) to heme O by substitution of the vinyl group on carbon 2 of heme B porphyrin ring with a hydroxyethyl farnesyl side group. In Prochlorococcus marinus (strain MIT 9303), this protein is Protoheme IX farnesyltransferase.